Consider the following 212-residue polypeptide: Protein-L-isoaspartate O-methyltransferase (212 aa).

Residue Ser-62 is part of the active site.

This sequence belongs to the methyltransferase superfamily. L-isoaspartyl/D-aspartyl protein methyltransferase family.

The protein localises to the cytoplasm. It catalyses the reaction [protein]-L-isoaspartate + S-adenosyl-L-methionine = [protein]-L-isoaspartate alpha-methyl ester + S-adenosyl-L-homocysteine. In terms of biological role, catalyzes the methyl esterification of L-isoaspartyl residues in peptides and proteins that result from spontaneous decomposition of normal L-aspartyl and L-asparaginyl residues. It plays a role in the repair and/or degradation of damaged proteins. The chain is Protein-L-isoaspartate O-methyltransferase from Pseudoalteromonas translucida (strain TAC 125).